The primary structure comprises 37 residues: MKVRPSVKPICPKCKIIRRKKRVMVICENPKHKQRQG.

It belongs to the bacterial ribosomal protein bL36 family.

The protein is Large ribosomal subunit protein bL36 of Hydrogenobaculum sp. (strain Y04AAS1).